The chain runs to 280 residues: Meiotic driver wtf35 (280 aa).

Positions 1-29 (MKNKDYPLRTSMDELSTKNDNEIDLEKGP) are enriched in basic and acidic residues. 2 disordered regions span residues 1–49 (MKNK…DLNN) and 64–100 (NKST…GTTD). A run of 4 helical transmembrane segments spans residues 105 to 125 (FLIK…PAVC), 142 to 162 (WTLI…SWYF), 184 to 204 (IPMA…PRVA), and 218 to 238 (SLAD…VETV).

The protein belongs to the WTF family. Homomer. Forms protein aggregates. The two isoforms can interact with each other and with themselves. High sequence similarity is required for their interaction.

It localises to the spore membrane. The protein resides in the vacuole membrane. It is found in the ascus epiplasm. The protein localises to the cytoplasm. Its subcellular location is the endoplasmic reticulum membrane. Promotes unequal transmission of alleles from the parental zygote to progeny spores by acting as poison/antidote system where the poison and antidote proteins are produced from the same locus; the poison component is trans-acting and targets all spores within an ascus whereas the antidote component is spore-specific, leading to poisoning of all progeny that do not inherit the allele. In terms of biological role, localizes isoform 2 to the vacuole thereby facilitating its degradation. Functionally, forms toxic aggregates that disrupt spore maturation. This is Meiotic driver wtf35 from Schizosaccharomyces pombe (Fission yeast).